A 414-amino-acid polypeptide reads, in one-letter code: Serine--tRNA ligase (414 aa).

Thr230–Glu232 lines the L-serine pocket. Arg261–Glu263 lines the ATP pocket. L-serine is bound at residue Glu284. Glu348 to Ser351 provides a ligand contact to ATP. An L-serine-binding site is contributed by Ser382.

It belongs to the class-II aminoacyl-tRNA synthetase family. Type-1 seryl-tRNA synthetase subfamily. As to quaternary structure, homodimer. The tRNA molecule binds across the dimer.

Its subcellular location is the cytoplasm. It carries out the reaction tRNA(Ser) + L-serine + ATP = L-seryl-tRNA(Ser) + AMP + diphosphate + H(+). The catalysed reaction is tRNA(Sec) + L-serine + ATP = L-seryl-tRNA(Sec) + AMP + diphosphate + H(+). It participates in aminoacyl-tRNA biosynthesis; selenocysteinyl-tRNA(Sec) biosynthesis; L-seryl-tRNA(Sec) from L-serine and tRNA(Sec): step 1/1. Functionally, catalyzes the attachment of serine to tRNA(Ser). Is also able to aminoacylate tRNA(Sec) with serine, to form the misacylated tRNA L-seryl-tRNA(Sec), which will be further converted into selenocysteinyl-tRNA(Sec). The protein is Serine--tRNA ligase of Campylobacter concisus (strain 13826).